Consider the following 204-residue polypeptide: VEL1-related protein AC977.05c (204 aa).

An N-terminal signal peptide occupies residues 1–17 (MIFKNLISLFFIGLATA).

Belongs to the VEL1 family.

It localises to the cytoplasm. It is found in the cytosol. The polypeptide is VEL1-related protein AC977.05c (Schizosaccharomyces pombe (strain 972 / ATCC 24843) (Fission yeast)).